Reading from the N-terminus, the 125-residue chain is Large ribosomal subunit protein bL17 (125 aa).

This sequence belongs to the bacterial ribosomal protein bL17 family. Part of the 50S ribosomal subunit. Contacts protein L32.

This Acinetobacter baylyi (strain ATCC 33305 / BD413 / ADP1) protein is Large ribosomal subunit protein bL17.